Reading from the N-terminus, the 169-residue chain is uncharacterized protein (169 aa).

This is an uncharacterized protein from Escherichia coli (strain K12).